The chain runs to 385 residues: Rubredoxin-NAD(+) reductase (385 aa).

Residues 8–11, 32–33, Ile-79, Glu-156, Asp-275, and Ile-293 contribute to the FAD site; these read AGTA and SR.

This sequence belongs to the FAD-dependent oxidoreductase family. In terms of assembly, homodimer. FAD is required as a cofactor.

The protein resides in the cytoplasm. The enzyme catalyses 2 reduced [rubredoxin] + NAD(+) + H(+) = 2 oxidized [rubredoxin] + NADH. Its pathway is hydrocarbon metabolism; alkane degradation. Involved in the hydrocarbon hydroxylating system, which transfers electrons from NADH to rubredoxin reductase and then through rubredoxin to alkane 1 monooxygenase. The protein is Rubredoxin-NAD(+) reductase (alkT) of Pseudomonas putida (Arthrobacter siderocapsulatus).